A 1519-amino-acid polypeptide reads, in one-letter code: Rho guanine nucleotide exchange factor 40 (1519 aa).

2 disordered regions span residues 194-237 (VGHQ…PVEG) and 253-503 (RGSP…LETV). Pro residues predominate over residues 200–218 (TLPPELPSGPPGLPSPPLP). Serine 262 carries the phosphoserine modification. The span at 280–290 (KGRHRRHRAWM) shows a compositional bias: basic residues. The span at 314-341 (ASPESPPGAEAVPEAAVLEVSEPPAEAV) shows a compositional bias: low complexity. Residues 355 to 367 (LRGGGGGGQGAEG) are compositionally biased toward gly residues. Phosphothreonine is present on threonine 371. Over residues 374-386 (RTGKGNRRKKRAA) the composition is skewed to basic residues. The residue at position 419 (serine 419) is a Phosphoserine. The span at 421–457 (SEHKLPECHLVKEEYEGSGKPESEPKELKTAGEKEPQ) shows a compositional bias: basic and acidic residues. A coiled-coil region spans residues 828-871 (SAEVQERLAQAREALALEENATSQKVLDIFEQRLEQVESGLHRA). A phosphoserine mark is found at serine 931 and serine 961. Residues 934 to 961 (ALREWGRCQARCQELERRIQQHVGEEAS) are a coiled coil. The segment at 955–1031 (HVGEEASPRG…ELAPEAEGRP (77 aa)) is disordered. The segment covering 980–996 (WGPRSPSPSLSSLLLPS) has biased composition (low complexity). Position 1082 is a phosphoserine (serine 1082). In terms of domain architecture, DH spans 1085–1253 (AQQRLVSELI…REQEARGRDL (169 aa)). The region spanning 1265 to 1372 (DLKEQGQLLH…WTSSIAQLLW (108 aa)) is the PH domain. Residues serine 1433, serine 1438, and serine 1474 each carry the phosphoserine modification. The tract at residues 1466-1519 (TLDSSGDVSPGPRNSPSLQPPHPGSSTPTLASRGILGLSRQSHARALSDPTTPL) is disordered. The span at 1467–1482 (LDSSGDVSPGPRNSPS) shows a compositional bias: polar residues. Threonine 1492 carries the phosphothreonine modification.

Expressed at higher level in the central nervous system and skeletal muscle and greater abundance in fetal than adult brain (at protein level).

The protein resides in the cytoplasm. Its function is as follows. May act as a guanine nucleotide exchange factor (GEF). The protein is Rho guanine nucleotide exchange factor 40 (ARHGEF40) of Homo sapiens (Human).